We begin with the raw amino-acid sequence, 152 residues long: Deoxyuridine 5'-triphosphate nucleotidohydrolase (152 aa).

Substrate contacts are provided by residues 71 to 73 (RSG), Asn84, 88 to 90 (LID), and Met98.

This sequence belongs to the dUTPase family. It depends on Mg(2+) as a cofactor.

The enzyme catalyses dUTP + H2O = dUMP + diphosphate + H(+). The protein operates within pyrimidine metabolism; dUMP biosynthesis; dUMP from dCTP (dUTP route): step 2/2. Functionally, this enzyme is involved in nucleotide metabolism: it produces dUMP, the immediate precursor of thymidine nucleotides and it decreases the intracellular concentration of dUTP so that uracil cannot be incorporated into DNA. This Shewanella baltica (strain OS155 / ATCC BAA-1091) protein is Deoxyuridine 5'-triphosphate nucleotidohydrolase.